The chain runs to 103 residues: Large ribosomal subunit protein uL24 (103 aa).

The protein belongs to the universal ribosomal protein uL24 family. Part of the 50S ribosomal subunit.

Its function is as follows. One of two assembly initiator proteins, it binds directly to the 5'-end of the 23S rRNA, where it nucleates assembly of the 50S subunit. In terms of biological role, one of the proteins that surrounds the polypeptide exit tunnel on the outside of the subunit. The sequence is that of Large ribosomal subunit protein uL24 from Alkaliphilus metalliredigens (strain QYMF).